The sequence spans 512 residues: MKKTTLLVILDGWGYSESDYFNAIKNANTPTWDSIWQDFPRTLISASSLEVGLPRGQMGNSEVGHVNIGCGRVVYQELTKIDKAIEEKTFGNNKAICDAIDNVIQKDSNLHLMGLLSPGGVHSHEEHIFEMIKIAKQKGVKRVYLHAFLDGRDTPPRSAESSIKKTDDLLQKLNLGYIASVSGRYYAMDRDNRWDRVEKAYNAIVNADAEFVCNSALEALEESYARDQSDEFVIPTCIQKDGKLIKVEDNDSVIFMNFRADRAREISHAFTDENFDHFPKDRHLNINFTTLTEYDSKLKCNVAFPPEQPVNTLGEVLMKNHKTQLRIAETEKYPHVTFFFNGGKEDQFEGEDRILIPSPKVATYDLQPEMSAPEVTDKLVDAINNGKYDCIVCNYANSDMVGHTGNYEAAMQAIEYLDKCLARLKDAILEHDGNMFITADHGNADMMVNPKTQKPHTAHTTNLVPFVYVGHKKAQVALEHGKLSDIAPTILNVMNIAQPQEMTGKTIFKFEK.

The Mn(2+) site is built by D11 and S61. Residue S61 is the Phosphoserine intermediate of the active site. Residues H122, 152-153, R184, R190, 259-262, and K332 each bind substrate; these read RD and RADR. Mn(2+) is bound by residues D399, H403, D440, H441, and H459.

It belongs to the BPG-independent phosphoglycerate mutase family. As to quaternary structure, monomer. Mn(2+) serves as cofactor.

The enzyme catalyses (2R)-2-phosphoglycerate = (2R)-3-phosphoglycerate. It functions in the pathway carbohydrate degradation; glycolysis; pyruvate from D-glyceraldehyde 3-phosphate: step 3/5. Functionally, catalyzes the interconversion of 2-phosphoglycerate and 3-phosphoglycerate. This chain is 2,3-bisphosphoglycerate-independent phosphoglycerate mutase, found in Francisella philomiragia subsp. philomiragia (strain ATCC 25017 / CCUG 19701 / FSC 153 / O#319-036).